The sequence spans 258 residues: Ubiquinone/menaquinone biosynthesis C-methyltransferase UbiE (258 aa).

Residues Thr81, Asp102, and Asn130–Ala131 contribute to the S-adenosyl-L-methionine site.

Belongs to the class I-like SAM-binding methyltransferase superfamily. MenG/UbiE family.

The enzyme catalyses a 2-demethylmenaquinol + S-adenosyl-L-methionine = a menaquinol + S-adenosyl-L-homocysteine + H(+). The catalysed reaction is a 2-methoxy-6-(all-trans-polyprenyl)benzene-1,4-diol + S-adenosyl-L-methionine = a 5-methoxy-2-methyl-3-(all-trans-polyprenyl)benzene-1,4-diol + S-adenosyl-L-homocysteine + H(+). Its pathway is quinol/quinone metabolism; menaquinone biosynthesis; menaquinol from 1,4-dihydroxy-2-naphthoate: step 2/2. The protein operates within cofactor biosynthesis; ubiquinone biosynthesis. Functionally, methyltransferase required for the conversion of demethylmenaquinol (DMKH2) to menaquinol (MKH2) and the conversion of 2-polyprenyl-6-methoxy-1,4-benzoquinol (DDMQH2) to 2-polyprenyl-3-methyl-6-methoxy-1,4-benzoquinol (DMQH2). The chain is Ubiquinone/menaquinone biosynthesis C-methyltransferase UbiE from Sinorhizobium fredii (strain NBRC 101917 / NGR234).